A 263-amino-acid chain; its full sequence is HTH-type transcriptional repressor NanR (263 aa).

Positions 1–22 are disordered; sequence MGLMNAFDSQTEDSSPAIGRNL. Residues 30–98 enclose the HTH gntR-type domain; sequence KKLSEMVEEE…NGERARVSRP (69 aa). The segment at residues 58 to 77 is a DNA-binding region (H-T-H motif); it reads ERELMAFFNVGRPSVREALA.

Belongs to the NanR family.

Transcriptional repressor that controls expression of the genes required for the catabolism of sialic acids. This chain is HTH-type transcriptional repressor NanR, found in Shigella boydii serotype 4 (strain Sb227).